We begin with the raw amino-acid sequence, 299 residues long: Non-structural protein V (299 aa).

Residues 40 to 94 (SDNPGQDRATCKEEEAGSSGLSKPCLSAIGSTEGGAPRIRGQGSGESDDDAETLG) are disordered. Positions 110–120 (YHVYDHSGEAV) are interaction with host STAT1. Residues 133-143 (SGLDGDSTLSG) show a composition bias toward low complexity. Disordered regions lie at residues 133 to 168 (SGLD…ITDR) and 204 to 229 (PKLG…TPIK). Positions 144 to 160 (GDDESENSDVDIGEPDT) are enriched in acidic residues. H232, C251, C255, C267, C269, C272, C276, and C279 together coordinate Zn(2+).

This sequence belongs to the paramyxoviruses V protein family. Interacts with host IFIH1/MDA5 and DHX58/LGP2; these interactions are involved in the inhibition of the host type I interferon signaling pathway. Interacts with host TYK2; this interaction inhibits the type I interferon signaling pathway without affecting the type II pathway. Interacts with host IRF7; this interaction inhibits IRF7 translocation to the nucleus. Interacts with host CHUK. Interacts with host RELA/p65; this interaction inhibits the nuclear translocation of NF-KappaB. Interacts (via N-terminus) with host STAT1 and JAK1; these interactions inhibit STAT1 phosphorylation by Jak1 and thereby the type I interferon signaling pathway. Interacts (via C-terminus) with host STAT2; this interaction is involved in the inhibition of the host type I interferon signaling pathway. Forms a complex with host PPP1CA and PPP1CC; this interaction prevents dephosphorylation of host IFIH1/MDA5 and leads to the inhibition of the host type I interferon signaling pathway. Interacts with host IRF9; this interaction prevents the binding of IRF9 to STAT2 and thereby the type I interferon signaling pathway. Interacts with host RIGI regulatory protein (via CARDs domain) and host TRIM25 (via SPRY domain); these interactions prevent TRIM25-mediated ubiquitination of RIG-I and disrupts downstream RIG-I signaling.

It is found in the host cytoplasm. Its function is as follows. Plays an essential role in the inhibition of host immune response. Prevents the establishment of cellular antiviral state by blocking interferon-alpha/beta (IFN-alpha/beta) production and signaling pathway. Interacts with host IFIH1/MDA5 and DHX58/LGP2 to inhibit the transduction pathway involved in the activation of IFN-beta promoter, thus protecting the virus against cell antiviral state. Blocks the type I interferon signaling pathway by interacting with host TYK2 and thereby inhibiting downstream STAT1 and STAT2 phosphorylation. Blocks the type I interferon signaling pathway by disrupting the RIG-I signaling pathway. Moderately affects the type II interferon signaling. Prevents PP1alpha/gamma-mediated dephosphorylation of host IFIH1/MDA5 and thus blocks its activation. The chain is Non-structural protein V (P/V) from Homo sapiens (Human).